A 186-amino-acid chain; its full sequence is Elongation factor P (186 aa).

The protein belongs to the elongation factor P family.

The protein localises to the cytoplasm. It participates in protein biosynthesis; polypeptide chain elongation. Involved in peptide bond synthesis. Stimulates efficient translation and peptide-bond synthesis on native or reconstituted 70S ribosomes in vitro. Probably functions indirectly by altering the affinity of the ribosome for aminoacyl-tRNA, thus increasing their reactivity as acceptors for peptidyl transferase. This is Elongation factor P from Beutenbergia cavernae (strain ATCC BAA-8 / DSM 12333 / CCUG 43141 / JCM 11478 / NBRC 16432 / NCIMB 13614 / HKI 0122).